Consider the following 252-residue polypeptide: Triosephosphate isomerase (252 aa).

9–11 (NWK) is a substrate binding site. His-100 serves as the catalytic Electrophile. Glu-171 serves as the catalytic Proton acceptor. Substrate contacts are provided by residues Gly-177, Ser-216, and 237 to 238 (GG).

Belongs to the triosephosphate isomerase family. As to quaternary structure, homodimer.

It is found in the cytoplasm. The catalysed reaction is D-glyceraldehyde 3-phosphate = dihydroxyacetone phosphate. Its pathway is carbohydrate biosynthesis; gluconeogenesis. It participates in carbohydrate degradation; glycolysis; D-glyceraldehyde 3-phosphate from glycerone phosphate: step 1/1. Its function is as follows. Involved in the gluconeogenesis. Catalyzes stereospecifically the conversion of dihydroxyacetone phosphate (DHAP) to D-glyceraldehyde-3-phosphate (G3P). The protein is Triosephosphate isomerase of Polynucleobacter asymbioticus (strain DSM 18221 / CIP 109841 / QLW-P1DMWA-1) (Polynucleobacter necessarius subsp. asymbioticus).